The primary structure comprises 227 residues: Chaperone protein FocC (227 aa).

An N-terminal signal peptide occupies residues 1 to 21 (MRIWAVLASFLVFFYIPQSYA).

The protein belongs to the periplasmic pilus chaperone family.

Its subcellular location is the periplasm. Involved in the biogenesis of the F1C fimbriae. This chain is Chaperone protein FocC (focC), found in Escherichia coli O6:H1 (strain CFT073 / ATCC 700928 / UPEC).